The primary structure comprises 274 residues: tRNA uridine(34) hydroxylase (274 aa).

Residues 121–217 form the Rhodanese domain; it reads SRSDVYTIDT…YFKSTKNTNN (97 aa). Cysteine 177 functions as the Cysteine persulfide intermediate in the catalytic mechanism.

It belongs to the TrhO family.

It catalyses the reaction uridine(34) in tRNA + AH2 + O2 = 5-hydroxyuridine(34) in tRNA + A + H2O. In terms of biological role, catalyzes oxygen-dependent 5-hydroxyuridine (ho5U) modification at position 34 in tRNAs. This Ehrlichia canis (strain Jake) protein is tRNA uridine(34) hydroxylase.